Here is a 274-residue protein sequence, read N- to C-terminus: NH(3)-dependent NAD(+) synthetase (274 aa).

46–53 lines the ATP pocket; it reads GISGGQDS. Asp52 lines the Mg(2+) pocket. Arg140 lines the deamido-NAD(+) pocket. Thr160 contributes to the ATP binding site. A Mg(2+)-binding site is contributed by Glu165. 2 residues coordinate deamido-NAD(+): Lys173 and Asp180. ATP contacts are provided by Lys189 and Thr211. 260 to 261 provides a ligand contact to deamido-NAD(+); that stretch reads HK.

The protein belongs to the NAD synthetase family. As to quaternary structure, homodimer.

It catalyses the reaction deamido-NAD(+) + NH4(+) + ATP = AMP + diphosphate + NAD(+) + H(+). It functions in the pathway cofactor biosynthesis; NAD(+) biosynthesis; NAD(+) from deamido-NAD(+) (ammonia route): step 1/1. Catalyzes the ATP-dependent amidation of deamido-NAD to form NAD. Uses ammonia as a nitrogen source. The polypeptide is NH(3)-dependent NAD(+) synthetase (Streptococcus pneumoniae serotype 2 (strain D39 / NCTC 7466)).